The following is a 917-amino-acid chain: Hexokinase-2 (917 aa).

M1 carries the N-acetylmethionine modification. Residues 1-16 (MIASHLLAYFFTELNH) form a mitochondrial-binding peptide (MBP) region. Hexokinase domains follow at residues 16–458 (HDQV…MVTA) and 464–906 (AYQH…LITA). Residues R30 and 84–89 (DLGGTN) contribute to the ATP site. Positions 73 to 207 (DGTEHGEFLA…DFDIDIVAMV (135 aa)) are hexokinase small subdomain 1. Residue 84–88 (DLGGT) coordinates D-glucose 6-phosphate. D-glucose-binding positions include 155-156 (SF), 172-173 (TK), 208-209 (ND), N235, E260, and 291-294 (QLFE). The segment at 208 to 447 (NDTVATMMTC…CDIRFLCSED (240 aa)) is hexokinase large subdomain 1. D209 contributes to the D-glucose 6-phosphate binding site. 413–415 (DGS) contributes to the D-glucose 6-phosphate binding site. 425 to 426 (KR) provides a ligand contact to ATP. D-glucose 6-phosphate-binding positions include S449 and 532-536 (DLGGT). Positions 521-655 (DGTEKGDFLA…EFDLDVVAVV (135 aa)) are hexokinase small subdomain 2. Position 532–537 (532–537 (DLGGTN)) interacts with ATP. D-glucose-binding positions include 603-604 (SF), 620-621 (TK), and 656-657 (ND). The interval 656–895 (NDTVGTMMTC…CDVSFLESED (240 aa)) is hexokinase large subdomain 2. Positions 657 and 680 each coordinate D-glucose 6-phosphate. Position 680 (T680) interacts with ATP. D-glucose-binding positions include 682 to 683 (SN), E708, and 739 to 742 (QRFE). Residues 747-748 (GM), 784-788 (TKFLS), and 863-867 (TLYKL) contribute to the ATP site. Residues 861 to 863 (DGT) and S897 contribute to the D-glucose 6-phosphate site.

The protein belongs to the hexokinase family. As to quaternary structure, monomer. Interacts with TIGAR; the interaction increases hexokinase activity in a hypoxia- and HIF1A-dependent manner.

The protein resides in the mitochondrion outer membrane. It localises to the cytoplasm. Its subcellular location is the cytosol. The catalysed reaction is a D-hexose + ATP = a D-hexose 6-phosphate + ADP + H(+). It carries out the reaction D-fructose + ATP = D-fructose 6-phosphate + ADP + H(+). The enzyme catalyses D-glucose + ATP = D-glucose 6-phosphate + ADP + H(+). It participates in carbohydrate metabolism; hexose metabolism. It functions in the pathway carbohydrate degradation; glycolysis; D-glyceraldehyde 3-phosphate and glycerone phosphate from D-glucose: step 1/4. Hexokinase activity is specifically inhibited by 2,6-disubstituted glucosamines. Functionally, catalyzes the phosphorylation of hexose, such as D-glucose and D-fructose, to hexose 6-phosphate (D-glucose 6-phosphate and D-fructose 6-phosphate, respectively). Mediates the initial step of glycolysis by catalyzing phosphorylation of D-glucose to D-glucose 6-phosphate. Plays a key role in maintaining the integrity of the outer mitochondrial membrane by preventing the release of apoptogenic molecules from the intermembrane space and subsequent apoptosis. The chain is Hexokinase-2 from Equus zebra (Mountain zebra).